The following is a 230-amino-acid chain: Ribonuclease 3 (230 aa).

The region spanning 8–135 (IVELKEKLGI…LIGAVYLQTN (128 aa)) is the RNase III domain. E48 serves as a coordination point for Mg(2+). Residue D52 is part of the active site. Mg(2+) is bound by residues D121 and E124. The active site involves E124. A DRBM domain is found at 161–230 (DYKTMIQELV…AHFAFQKLSK (70 aa)).

It belongs to the ribonuclease III family. As to quaternary structure, homodimer. Mg(2+) serves as cofactor.

Its subcellular location is the cytoplasm. It carries out the reaction Endonucleolytic cleavage to 5'-phosphomonoester.. In terms of biological role, digests double-stranded RNA. Involved in the processing of primary rRNA transcript to yield the immediate precursors to the large and small rRNAs (23S and 16S). Processes some mRNAs, and tRNAs when they are encoded in the rRNA operon. Processes pre-crRNA and tracrRNA of type II CRISPR loci if present in the organism. The protein is Ribonuclease 3 of Natranaerobius thermophilus (strain ATCC BAA-1301 / DSM 18059 / JW/NM-WN-LF).